We begin with the raw amino-acid sequence, 203 residues long: Peptide deformylase (203 aa).

Fe cation contacts are provided by cysteine 130 and histidine 173. The active site involves glutamate 174. Histidine 177 lines the Fe cation pocket.

This sequence belongs to the polypeptide deformylase family. Fe(2+) is required as a cofactor.

It carries out the reaction N-terminal N-formyl-L-methionyl-[peptide] + H2O = N-terminal L-methionyl-[peptide] + formate. In terms of biological role, removes the formyl group from the N-terminal Met of newly synthesized proteins. Requires at least a dipeptide for an efficient rate of reaction. N-terminal L-methionine is a prerequisite for activity but the enzyme has broad specificity at other positions. This chain is Peptide deformylase, found in Streptococcus pneumoniae serotype 4 (strain ATCC BAA-334 / TIGR4).